We begin with the raw amino-acid sequence, 205 residues long: Transcriptional regulator GfcR (205 aa).

Belongs to the purine/pyrimidine phosphoribosyltransferase family. GfcR subfamily.

The protein is Transcriptional regulator GfcR of Methanococcus maripaludis (strain DSM 14266 / JCM 13030 / NBRC 101832 / S2 / LL).